Here is a 180-residue protein sequence, read N- to C-terminus: Segregation and condensation protein B (180 aa).

Belongs to the ScpB family. As to quaternary structure, homodimer. Homodimerization may be required to stabilize the binding of ScpA to the Smc head domains. Component of a cohesin-like complex composed of ScpA, ScpB and the Smc homodimer, in which ScpA and ScpB bind to the head domain of Smc. The presence of the three proteins is required for the association of the complex with DNA.

Its subcellular location is the cytoplasm. In terms of biological role, participates in chromosomal partition during cell division. May act via the formation of a condensin-like complex containing Smc and ScpA that pull DNA away from mid-cell into both cell halves. This Staphylococcus aureus (strain USA300) protein is Segregation and condensation protein B.